Reading from the N-terminus, the 111-residue chain is uncharacterized protein (111 aa).

A disordered region spans residues 12–34; the sequence is AWCPSRPPASAPSAPQEAARRGD. The required for interaction with PPP3CA stretch occupies residues 71-76; that stretch reads PNIIIT. Phosphothreonine occurs at positions 79 and 81.

In terms of assembly, interacts (via PxIxIT motif, when phosphorylated on Thr-79) with PPP3CA.

This is an uncharacterized protein from Mus musculus (Mouse).